A 101-amino-acid polypeptide reads, in one-letter code: Small ribosomal subunit protein uS14 (101 aa).

This sequence belongs to the universal ribosomal protein uS14 family. In terms of assembly, part of the 30S ribosomal subunit. Contacts proteins S3 and S10.

Binds 16S rRNA, required for the assembly of 30S particles and may also be responsible for determining the conformation of the 16S rRNA at the A site. This chain is Small ribosomal subunit protein uS14, found in Caulobacter vibrioides (strain ATCC 19089 / CIP 103742 / CB 15) (Caulobacter crescentus).